Consider the following 1044-residue polypeptide: Translation initiation factor IF-2 (1044 aa).

Residues 31 to 425 (VRSASSTVEP…RKSKRAKRQE (395 aa)) form a disordered region. Composition is skewed to pro residues over residues 77 to 98 (GPAP…PQPA) and 106 to 116 (APAPAPAPRPA). Positions 117-148 (EPAANPAPAAPPAFQAPAPAPAERPAAAQRPA) are enriched in low complexity. Over residues 168 to 185 (GGPGQGPRPGARPGGPGA) the composition is skewed to gly residues. The span at 204 to 247 (GPGDRPERSERPDRGDRPQGDRPRSDRPQGERQQGDRPQGDRPG) shows a compositional bias: basic and acidic residues. Positions 285 to 304 (GGAPRPGNNPFASNQGMPRP) are enriched in low complexity. Positions 305–328 (QGGPRPTPAGPGGPRPGGPRPNPG) are enriched in pro residues. The segment covering 329–338 (MMPARPTVGR) has biased composition (low complexity). Positions 339 to 409 (PGAGPGAGRP…GTQGAFGRAG (71 aa)) are enriched in gly residues. Over residues 413-422 (VRGRKSKRAK) the composition is skewed to basic residues. Residues 537 to 709 (ARPPVVTVMG…VLLTADASLD (173 aa)) form the tr-type G domain. A G1 region spans residues 546–553 (GHVDHGKT). 546-553 (GHVDHGKT) provides a ligand contact to GTP. Residues 571 to 575 (GITQH) form a G2 region. Residues 596–599 (DTPG) are G3. GTP is bound by residues 596–600 (DTPGH) and 650–653 (NKVD). A G4 region spans residues 650–653 (NKVD). The tract at residues 686–688 (SAR) is G5.

The protein belongs to the TRAFAC class translation factor GTPase superfamily. Classic translation factor GTPase family. IF-2 subfamily.

Its subcellular location is the cytoplasm. In terms of biological role, one of the essential components for the initiation of protein synthesis. Protects formylmethionyl-tRNA from spontaneous hydrolysis and promotes its binding to the 30S ribosomal subunits. Also involved in the hydrolysis of GTP during the formation of the 70S ribosomal complex. This is Translation initiation factor IF-2 from Kineococcus radiotolerans (strain ATCC BAA-149 / DSM 14245 / SRS30216).